Consider the following 239-residue polypeptide: Ribose-5-phosphate isomerase A (239 aa).

Substrate contacts are provided by residues 40–43 (SGST), 96–99 (DGAD), and 110–113 (KGGG). The Proton acceptor role is filled by Glu-119. Lys-137 provides a ligand contact to substrate.

Belongs to the ribose 5-phosphate isomerase family. In terms of assembly, homodimer.

The catalysed reaction is aldehydo-D-ribose 5-phosphate = D-ribulose 5-phosphate. It participates in carbohydrate degradation; pentose phosphate pathway; D-ribose 5-phosphate from D-ribulose 5-phosphate (non-oxidative stage): step 1/1. Functionally, catalyzes the reversible conversion of ribose-5-phosphate to ribulose 5-phosphate. The chain is Ribose-5-phosphate isomerase A from Methanococcus vannielii (strain ATCC 35089 / DSM 1224 / JCM 13029 / OCM 148 / SB).